A 491-amino-acid polypeptide reads, in one-letter code: Glutamyl-tRNA(Gln) amidotransferase subunit A (491 aa).

Residues K76 and S154 each act as charge relay system in the active site. Catalysis depends on S178, which acts as the Acyl-ester intermediate.

The protein belongs to the amidase family. GatA subfamily. Heterotrimer of A, B and C subunits.

The catalysed reaction is L-glutamyl-tRNA(Gln) + L-glutamine + ATP + H2O = L-glutaminyl-tRNA(Gln) + L-glutamate + ADP + phosphate + H(+). Functionally, allows the formation of correctly charged Gln-tRNA(Gln) through the transamidation of misacylated Glu-tRNA(Gln) in organisms which lack glutaminyl-tRNA synthetase. The reaction takes place in the presence of glutamine and ATP through an activated gamma-phospho-Glu-tRNA(Gln). This is Glutamyl-tRNA(Gln) amidotransferase subunit A from Cereibacter sphaeroides (strain ATCC 17029 / ATH 2.4.9) (Rhodobacter sphaeroides).